Reading from the N-terminus, the 155-residue chain is Putative pre-16S rRNA nuclease (155 aa).

It belongs to the YqgF nuclease family.

The protein localises to the cytoplasm. Its function is as follows. Could be a nuclease involved in processing of the 5'-end of pre-16S rRNA. This Wolbachia sp. subsp. Brugia malayi (strain TRS) protein is Putative pre-16S rRNA nuclease.